We begin with the raw amino-acid sequence, 524 residues long: M phase phosphoprotein 10 (524 aa).

Positions 85–92 match the Nuclear localization signal 1 motif; the sequence is VKRFAKNP. 2 disordered regions span residues 100 to 243 and 259 to 283; these read KLAL…KLGK and KLKDLSEDEEAEIENKGNEKLSTHE. Over residues 109-168 the composition is skewed to acidic residues; sequence DDIDEMDMDGFDSDDVDDEDKEIESNDSEGEDEEEEEEDEEEEEEEEEEEEEEKDGDNEG. Positions 131–165 form a coiled coil; that stretch reads IESNDSEGEDEEEEEEDEEEEEEEEEEEEEEKDGD. Positions 169–180 are enriched in basic and acidic residues; the sequence is IEDKFFKIKELE. The span at 181–191 shows a compositional bias: acidic residues; that stretch reads EFLEEGEAEEY. The span at 196–207 shows a compositional bias: basic residues; it reads KNKKGVAQRKKQ. Acidic residues predominate over residues 210 to 238; that stretch reads SDDEDEEDDDDEEEDVEFDAFAGGDDEET. Residues 257–302 are a coiled coil; that stretch reads KMKLKDLSEDEEAEIENKGNEKLSTHERARLKLQSKIEQMEKANLD. The segment covering 271 to 283 has biased composition (basic and acidic residues); sequence IENKGNEKLSTHE. The Nuclear localization signal 2 motif lies at 373–380; sequence GKREAKEL. The interval 479–524 is disordered; that stretch reads KGDIKDESELTQEDRKRRRANKKRKFKAESANEPPKKALDTSTKNP. Residues 480–493 are compositionally biased toward basic and acidic residues; the sequence is GDIKDESELTQEDR. The span at 494 to 504 shows a compositional bias: basic residues; sequence KRRRANKKRKF. Basic and acidic residues predominate over residues 505–517; that stretch reads KAESANEPPKKAL.

It belongs to the MPP10 family. Component of the ribosomal small subunit (SSU) processome. Interacts with THAL in the nucleus.

It is found in the nucleus. It localises to the nucleolus. Its function is as follows. Involved in nucleolar processing of pre-18S ribosomal RNA. The polypeptide is M phase phosphoprotein 10 (Arabidopsis thaliana (Mouse-ear cress)).